We begin with the raw amino-acid sequence, 139 residues long: UDP-glucose 4-epimerase (139 aa).

NAD(+) contacts are provided by residues 11 to 12 (YI), 31 to 36 (DNLCNS), 58 to 59 (DI), 80 to 84 (FAGLK), Asn99, and Ser124. Position 124 (Ser124) interacts with substrate. The active-site Proton acceptor is the Tyr136.

Belongs to the NAD(P)-dependent epimerase/dehydratase family. As to quaternary structure, homodimer. It depends on NAD(+) as a cofactor.

The enzyme catalyses UDP-alpha-D-glucose = UDP-alpha-D-galactose. It participates in carbohydrate metabolism; galactose metabolism. Functionally, involved in the metabolism of galactose. Catalyzes the conversion of UDP-galactose (UDP-Gal) to UDP-glucose (UDP-Glc) through a mechanism involving the transient reduction of NAD. The protein is UDP-glucose 4-epimerase (galE) of Klebsiella pneumoniae.